The following is a 528-amino-acid chain: Vacuolar fusion protein MON1 homolog (528 aa).

Residues 1-16 (MEVEQTSVRSDTNSTC) show a composition bias toward polar residues. The interval 1-50 (MEVEQTSVRSDTNSTCEYLDAEGDPESPNLYQEADPDQEAEQQNHSIISE) is disordered.

It belongs to the MON1/SAND family. As to quaternary structure, component of the Mon1-Ccz1 guanyl-nucleotide exchange factor complex made up of Mon1, Ccz1 and Bulli; the interaction of Bulli with the Mon1-Ccz1 heterodimer is mediated via the C-terminal Mic1 domain of Bulli. Mon1 and Ccz1 form a stable complex which displays Rab7 GEF activity with or without Bulli; GEF activity is enhanced by Bulli possibly by improving membrane association of the complex. Interacts with Rab5 and Rab7; preferentially binds GTP-bound Rab5 and GDP-bound Rab7.

The protein resides in the cytoplasm. The protein localises to the cytosol. Its activity is regulated as follows. The Rab7 guanyl-nucleotide exchange factor (GEF) activity of the Mon1-Ccz1 complex is autoinhibited by the N-terminal disordered region of Mon1. GEF activity is stimulated by Rab5-mediated recruitment to membranes. Its function is as follows. Part of the Mon1-Ccz1 guanyl-nucleotide exchange factor complex specific for Rab7 that promotes the exchange of GDP to GTP, converting Rab7 from an inactive GDP-bound form into an active GTP-bound form. Plays an important role in membrane trafficking through the secretory apparatus. Required for recruitment of Rab7 to endosomal and autophagosomal membranes to mediate endolysosomal and autolysosomal vesicle maturation. Required for fusion of multivesicular bodies and lysosomes but not their formation or trafficking. Involved in the replacement of Rab5 (and possibly Rab4) with Rab7, also known as Rab conversion or the Rab cascade, during endosomal maturation. The Mon1-Ccz1 complex is recruited to phosphatidylinositol 3-phosphate (PtdIns[3]P) enriched membranes by Rab5, which stimulates recruitment and guanyl-nucleotide exchange of Rab7. Together with Rab7 required for autolysosome formation in fat cells and autophagic degradation during starvation-induced basal and developmental autophagy. Involved in neuromuscular junction (NMJ) presynaptic bouton function and morphogenesis. Together with Rab7, regulates levels of postsynaptic glutamate receptor GluRIIA in the NMJ presynapse. In Drosophila melanogaster (Fruit fly), this protein is Vacuolar fusion protein MON1 homolog.